Reading from the N-terminus, the 400-residue chain is Putative cytochrome P450 133B2 (400 aa).

Cysteine 348 contacts heme.

This sequence belongs to the cytochrome P450 family. Heme serves as cofactor.

This is Putative cytochrome P450 133B2 (cyp133B2) from Xylella fastidiosa (strain 9a5c).